Here is a 124-residue protein sequence, read N- to C-terminus: Small ribosomal subunit protein uS12 (124 aa).

A 3-methylthioaspartic acid modification is found at D89. A disordered region spans residues T105–K124.

This sequence belongs to the universal ribosomal protein uS12 family. In terms of assembly, part of the 30S ribosomal subunit. Contacts proteins S8 and S17. May interact with IF1 in the 30S initiation complex.

In terms of biological role, with S4 and S5 plays an important role in translational accuracy. Its function is as follows. Interacts with and stabilizes bases of the 16S rRNA that are involved in tRNA selection in the A site and with the mRNA backbone. Located at the interface of the 30S and 50S subunits, it traverses the body of the 30S subunit contacting proteins on the other side and probably holding the rRNA structure together. The combined cluster of proteins S8, S12 and S17 appears to hold together the shoulder and platform of the 30S subunit. The sequence is that of Small ribosomal subunit protein uS12 from Vesicomyosocius okutanii subsp. Calyptogena okutanii (strain HA).